The chain runs to 287 residues: rRNA adenine N-6-methyltransferase (287 aa).

Basic residues predominate over residues 1-13 (MKKKNHKYRGKKL). The tract at residues 1 to 21 (MKKKNHKYRGKKLNRGESPNF) is disordered. Residues histidine 25, methionine 27, glycine 52, glutamate 73, aspartate 98, and asparagine 114 each contribute to the S-adenosyl-L-methionine site.

Belongs to the class I-like SAM-binding methyltransferase superfamily. rRNA adenine N(6)-methyltransferase family.

In terms of biological role, involved in erythromycin resistance. This chain is rRNA adenine N-6-methyltransferase (ermD), found in Bacillus licheniformis.